Reading from the N-terminus, the 431-residue chain is Asparagine--tRNA ligase 1 (431 aa).

This sequence belongs to the class-II aminoacyl-tRNA synthetase family. As to quaternary structure, homodimer.

The protein localises to the cytoplasm. The catalysed reaction is tRNA(Asn) + L-asparagine + ATP = L-asparaginyl-tRNA(Asn) + AMP + diphosphate + H(+). In Lactiplantibacillus plantarum (strain ATCC BAA-793 / NCIMB 8826 / WCFS1) (Lactobacillus plantarum), this protein is Asparagine--tRNA ligase 1 (asnS1).